The chain runs to 774 residues: Mastermind-like domain-containing protein 1 (774 aa).

7 disordered regions span residues 257–279 (STGI…SSMA), 310–365 (LAAS…PQSL), 386–421 (ALLS…QPQF), 442–473 (HLMS…QQSF), 525–609 (GMAS…QPDH), 656–678 (PQHQ…VSPS), and 755–774 (LPSC…GNDP). Positions 331–361 (LPPPGLSPPYRPVPSPHPPPLPLPPPPPPFS) are enriched in pro residues. Over residues 386-397 (ALLSSMTSSSNA) the composition is skewed to polar residues. A compositionally biased stretch (low complexity) spans 574-609 (QQPTPTQASSATASSTATATLQLQQQQQQQQQQPDH). The span at 656-669 (PQHQHGNSFTSRQD) shows a compositional bias: polar residues. A Phosphoserine modification is found at Ser-676.

This sequence belongs to the mastermind family. Expressed in fetal brain, fetal ovary and fetal testis. Expressed in adult brain, ovary, skin, testis, uterus. Highly expressed in skeletal muscle.

The protein localises to the nucleus. Its function is as follows. Transactivates the HES3 promoter independently of NOTCH proteins. HES3 is a non-canonical NOTCH target gene which lacks binding sites for RBPJ. This is Mastermind-like domain-containing protein 1 (MAMLD1) from Homo sapiens (Human).